We begin with the raw amino-acid sequence, 398 residues long: Dihydroorotase (398 aa).

Zn(2+)-binding residues include histidine 58 and histidine 60. Substrate-binding positions include 60–62 (HFR) and asparagine 92. 3 residues coordinate Zn(2+): aspartate 151, histidine 178, and histidine 215. Asparagine 256 is a substrate binding site. Residue aspartate 283 coordinates Zn(2+). Residue aspartate 283 is part of the active site. Substrate-binding positions include histidine 287 and 297–298 (PG).

It belongs to the metallo-dependent hydrolases superfamily. DHOase family. Class I DHOase subfamily. The cofactor is Zn(2+).

The catalysed reaction is (S)-dihydroorotate + H2O = N-carbamoyl-L-aspartate + H(+). It participates in pyrimidine metabolism; UMP biosynthesis via de novo pathway; (S)-dihydroorotate from bicarbonate: step 3/3. Functionally, catalyzes the reversible cyclization of carbamoyl aspartate to dihydroorotate. The chain is Dihydroorotase from Clostridium botulinum (strain Eklund 17B / Type B).